The chain runs to 168 residues: Large ribosomal subunit protein uL29c (168 aa).

Residues 1 to 20 (MLAIHSLSSTPCSSGLTSPP) are disordered. The transit peptide at 1-58 (MLAIHSLSSTPCSSGLTSPPKSTLLTKSSFHGLRLPSVNLSSSLRLRVQTPPSSVVVM) directs the protein to the chloroplast.

Component of the chloroplast large ribosomal subunit (LSU). Mature 70S chloroplast ribosomes of higher plants consist of a small (30S) and a large (50S) subunit. The 30S small subunit contains 1 molecule of ribosomal RNA (16S rRNA) and 24 different proteins. The 50S large subunit contains 3 rRNA molecules (23S, 5S and 4.5S rRNA) and 33 different proteins.

The protein resides in the plastid. It localises to the chloroplast. Its function is as follows. Component of the chloroplast ribosome (chloro-ribosome), a dedicated translation machinery responsible for the synthesis of chloroplast genome-encoded proteins, including proteins of the transcription and translation machinery and components of the photosynthetic apparatus. This Spinacia oleracea (Spinach) protein is Large ribosomal subunit protein uL29c (RPL29).